The chain runs to 418 residues: Gamma-glutamyl phosphate reductase (418 aa).

It belongs to the gamma-glutamyl phosphate reductase family.

Its subcellular location is the cytoplasm. It carries out the reaction L-glutamate 5-semialdehyde + phosphate + NADP(+) = L-glutamyl 5-phosphate + NADPH + H(+). It participates in amino-acid biosynthesis; L-proline biosynthesis; L-glutamate 5-semialdehyde from L-glutamate: step 2/2. In terms of biological role, catalyzes the NADPH-dependent reduction of L-glutamate 5-phosphate into L-glutamate 5-semialdehyde and phosphate. The product spontaneously undergoes cyclization to form 1-pyrroline-5-carboxylate. The chain is Gamma-glutamyl phosphate reductase from Chlorobium limicola (strain DSM 245 / NBRC 103803 / 6330).